Reading from the N-terminus, the 99-residue chain is Cell cycle protein GpsB (99 aa).

Residues 34–71 (LDMIIKDYETFHQEIEELQQENLQLKKQLEEASKKQPV) adopt a coiled-coil conformation.

It belongs to the GpsB family. As to quaternary structure, forms polymers through the coiled coil domains. Interacts with PBP1, MreC and EzrA.

Its subcellular location is the cytoplasm. In terms of biological role, divisome component that associates with the complex late in its assembly, after the Z-ring is formed, and is dependent on DivIC and PBP2B for its recruitment to the divisome. Together with EzrA, is a key component of the system that regulates PBP1 localization during cell cycle progression. Its main role could be the removal of PBP1 from the cell pole after pole maturation is completed. Also contributes to the recruitment of PBP1 to the division complex. Not essential for septum formation. The polypeptide is Cell cycle protein GpsB (Bacillus velezensis (strain DSM 23117 / BGSC 10A6 / LMG 26770 / FZB42) (Bacillus amyloliquefaciens subsp. plantarum)).